Consider the following 170-residue polypeptide: MNINRSRLINNFIFISILVFFDQWSKYLVVKYIRIGTEYLSFFGDFFKIIHVRNTGVLFSIGSNIDPSLKNLFFLIIPIIILIFVFSFALKETNRIARIALVLILSGGIGNIIDRFFRPLGVVDFLDVKFFGIFGLQRWPTFNFADSYVVIGITLFIIYDLFAKNQSTNL.

The next 3 membrane-spanning stretches (helical) occupy residues 13–33, 72–92, and 96–113; these read IFIS…VKYI, LFFL…ALKE, and IARI…GNII. Active-site residues include D124 and D146. Residues 142-162 traverse the membrane as a helical segment; that stretch reads FNFADSYVVIGITLFIIYDLF.

The protein belongs to the peptidase A8 family.

It is found in the cell inner membrane. It catalyses the reaction Release of signal peptides from bacterial membrane prolipoproteins. Hydrolyzes -Xaa-Yaa-Zaa-|-(S,diacylglyceryl)Cys-, in which Xaa is hydrophobic (preferably Leu), and Yaa (Ala or Ser) and Zaa (Gly or Ala) have small, neutral side chains.. It functions in the pathway protein modification; lipoprotein biosynthesis (signal peptide cleavage). This protein specifically catalyzes the removal of signal peptides from prolipoproteins. This is Lipoprotein signal peptidase from Borrelia turicatae (strain 91E135).